The following is a 565-amino-acid chain: Dihydroxy-acid dehydratase (565 aa).

Cysteine 53 contributes to the [2Fe-2S] cluster binding site. Aspartate 85 is a Mg(2+) binding site. Cysteine 126 contributes to the [2Fe-2S] cluster binding site. Mg(2+) contacts are provided by aspartate 127 and lysine 128. Lysine 128 bears the N6-carboxylysine mark. Residue cysteine 198 coordinates [2Fe-2S] cluster. Position 450 (glutamate 450) interacts with Mg(2+). Catalysis depends on serine 476, which acts as the Proton acceptor.

This sequence belongs to the IlvD/Edd family. Homodimer. [2Fe-2S] cluster is required as a cofactor. It depends on Mg(2+) as a cofactor.

It catalyses the reaction (2R)-2,3-dihydroxy-3-methylbutanoate = 3-methyl-2-oxobutanoate + H2O. The enzyme catalyses (2R,3R)-2,3-dihydroxy-3-methylpentanoate = (S)-3-methyl-2-oxopentanoate + H2O. It functions in the pathway amino-acid biosynthesis; L-isoleucine biosynthesis; L-isoleucine from 2-oxobutanoate: step 3/4. It participates in amino-acid biosynthesis; L-valine biosynthesis; L-valine from pyruvate: step 3/4. Functionally, functions in the biosynthesis of branched-chain amino acids. Catalyzes the dehydration of (2R,3R)-2,3-dihydroxy-3-methylpentanoate (2,3-dihydroxy-3-methylvalerate) into 2-oxo-3-methylpentanoate (2-oxo-3-methylvalerate) and of (2R)-2,3-dihydroxy-3-methylbutanoate (2,3-dihydroxyisovalerate) into 2-oxo-3-methylbutanoate (2-oxoisovalerate), the penultimate precursor to L-isoleucine and L-valine, respectively. The chain is Dihydroxy-acid dehydratase from Synechococcus sp. (strain JA-2-3B'a(2-13)) (Cyanobacteria bacterium Yellowstone B-Prime).